We begin with the raw amino-acid sequence, 734 residues long: Photosystem I P700 chlorophyll a apoprotein A2 (734 aa).

A run of 8 helical transmembrane segments spans residues Ile-46 to Ala-69, Leu-135 to Gln-158, Leu-175 to Ile-199, Met-273 to Tyr-291, Leu-330 to Tyr-353, Ala-369 to Ile-395, Ala-417 to His-439, and Phe-517 to Val-535. [4Fe-4S] cluster is bound by residues Cys-559 and Cys-568. The next 2 membrane-spanning stretches (helical) occupy residues Ala-575–Trp-596 and Leu-643–Ile-665. His-654, Met-662, and Tyr-670 together coordinate chlorophyll a. Trp-671 lines the phylloquinone pocket. A helical membrane pass occupies residues Leu-707 to Ala-727.

This sequence belongs to the PsaA/PsaB family. In terms of assembly, the PsaA/B heterodimer binds the P700 chlorophyll special pair and subsequent electron acceptors. PSI consists of a core antenna complex that captures photons, and an electron transfer chain that converts photonic excitation into a charge separation. The eukaryotic PSI reaction center is composed of at least 11 subunits. The cofactor is P700 is a chlorophyll a/chlorophyll a' dimer, A0 is one or more chlorophyll a, A1 is one or both phylloquinones and FX is a shared 4Fe-4S iron-sulfur center..

Its subcellular location is the plastid. It localises to the chloroplast thylakoid membrane. The catalysed reaction is reduced [plastocyanin] + hnu + oxidized [2Fe-2S]-[ferredoxin] = oxidized [plastocyanin] + reduced [2Fe-2S]-[ferredoxin]. Functionally, psaA and PsaB bind P700, the primary electron donor of photosystem I (PSI), as well as the electron acceptors A0, A1 and FX. PSI is a plastocyanin/cytochrome c6-ferredoxin oxidoreductase, converting photonic excitation into a charge separation, which transfers an electron from the donor P700 chlorophyll pair to the spectroscopically characterized acceptors A0, A1, FX, FA and FB in turn. Oxidized P700 is reduced on the lumenal side of the thylakoid membrane by plastocyanin or cytochrome c6. The chain is Photosystem I P700 chlorophyll a apoprotein A2 from Gracilaria tenuistipitata var. liui (Red alga).